Reading from the N-terminus, the 181-residue chain is Probable integrase/recombinase YoeC (181 aa).

In terms of domain architecture, Tyr recombinase spans 3 to 176 (IVQPIRSLEK…DEDTTRAAYK (174 aa)). Residues Arg-40, Lys-64, His-128, Arg-131, and His-154 contribute to the active site. Tyr-163 serves as the catalytic O-(3'-phospho-DNA)-tyrosine intermediate.

The protein belongs to the 'phage' integrase family.

The chain is Probable integrase/recombinase YoeC (yoeC) from Bacillus subtilis (strain 168).